We begin with the raw amino-acid sequence, 312 residues long: Iron/alpha-ketoglutarate-dependent dioxygenase penM (312 aa).

Fe cation contacts are provided by His134, Asp136, and His211. The interval Leu287–Gln312 is disordered.

This sequence belongs to the PhyH family. In terms of assembly, homodimer. Fe cation is required as a cofactor.

The catalysed reaction is (-)-cyclopeptine + 2-oxoglutarate + O2 = (Z)-dehydrocyclopeptine + succinate + CO2 + H2O. It carries out the reaction (Z)-dehydrocyclopeptine + 2-oxoglutarate + O2 = (-)-cyclopenine + succinate + CO2. The enzyme catalyses (-)-4'-methoxycyclopeptine + 2-oxoglutarate + O2 = (Z)-4'-methoxydehydrocyclopeptine + succinate + CO2 + H2O. It catalyses the reaction (Z)-4'-methoxydehydrocyclopeptine + 2-oxoglutarate + O2 = (-)-4'-methoxycyclopenine + succinate + CO2. It participates in secondary metabolite biosynthesis. It functions in the pathway alkaloid biosynthesis. The protein operates within mycotoxin biosynthesis. Its function is as follows. Iron/alpha-ketoglutarate-dependent dioxygenase; part of the gene cluster that mediates the biosynthesis of penigequinolones, potent insecticidal alkaloids that contain a highly modified 10-carbon prenyl group. The first stage is catalyzed by the nonribosomal peptide synthetase penN that condenses anthranilic acid and O-methyl-L-tyrosine to produce 4'-methoxycyclopeptin. 4'-methoxycyclopeptin is then converted to 4'-methoxydehydrocyclopeptin by the ketoglutarate-dependent dioxygenase penM through dehydrogenation to form a double bond between C-alpha and C-beta of the O-methyltyrosine side chain. PenM also converts its first product methoxydehydrocyclopeptin to 4'-methoxycyclopenin. The following conversion of 4'methoxycyclopenin into 4'-methoxyviridicatin is catalyzed by the cyclopenase penL. 4'-methoxyviridicatin is the precursor of quinolone natural products, and is further converted to quinolinone B. The prenyltransferase penI then catalyzes the canonical Friedel-Crafts alkylation of quinolinone B with dimethylallyl cation to yield dimethylallyl quinolone, which is subjected to FAD-dependent dehydrogenation by the FAD-linked oxidoreductase penH to yield conjugated aryl diene. The delta(3') double bond then serves as the site of the second alkylation with DMAPP catalyzed by the prenyltransferase penG to yield a carbenium ion intermediate, which can be attacked by H(2)O to yield a styrenyl quinolone containing a C3'-hydroxyprenyl chain, or undergo cyclization to yield yaequinolones J1 and J2. The conversion of the styrenyl quinolone into the tetrahydrofuran-containing yaequinolone C is performed by the FAD-dependent monooxygenase penE and involves epoxidation of the terminal C7'-C8' olefin, followed by epoxide ring opening initiated by the C3' hydroxyl group. The predicted cysteine hydrolase penJ acts as an epoxide hydrolase that enhances the rate of the 5-exo-tet cyclization step, increasing the yield of yaequinolone C. PenF catalyzes the cationic rearrangement of the epoxide formed by penE (before ring opening to produce yaequinolone C) into yaequinolone D. Finally, the short-chain dehydrogenase/reductase (SDR)-like reductase penD, catalyzes both the dehydration of yaequinolone D and the reduction of the resulting oxonium to yield penigequinolone. The sequence is that of Iron/alpha-ketoglutarate-dependent dioxygenase penM from Penicillium thymicola.